A 334-amino-acid chain; its full sequence is Aspartate carbamoyltransferase catalytic subunit (334 aa).

Carbamoyl phosphate is bound by residues arginine 70 and threonine 71. Lysine 98 contacts L-aspartate. The carbamoyl phosphate site is built by arginine 120, histidine 150, and glutamine 153. L-aspartate contacts are provided by arginine 183 and arginine 239. Carbamoyl phosphate-binding residues include glycine 280 and proline 281.

The protein belongs to the aspartate/ornithine carbamoyltransferase superfamily. ATCase family. In terms of assembly, heterododecamer (2C3:3R2) of six catalytic PyrB chains organized as two trimers (C3), and six regulatory PyrI chains organized as three dimers (R2).

It catalyses the reaction carbamoyl phosphate + L-aspartate = N-carbamoyl-L-aspartate + phosphate + H(+). Its pathway is pyrimidine metabolism; UMP biosynthesis via de novo pathway; (S)-dihydroorotate from bicarbonate: step 2/3. In terms of biological role, catalyzes the condensation of carbamoyl phosphate and aspartate to form carbamoyl aspartate and inorganic phosphate, the committed step in the de novo pyrimidine nucleotide biosynthesis pathway. This Pseudomonas paraeruginosa (strain DSM 24068 / PA7) (Pseudomonas aeruginosa (strain PA7)) protein is Aspartate carbamoyltransferase catalytic subunit.